Reading from the N-terminus, the 247-residue chain is MSEKIAILSAYSFVNIEEPESLIPKLLFVGKRKYVKGTILLSKEGFNGSFSGSYESVNLVLEELKKLTNTKDVNVKINCSEIHPFQKLKVRLKKEIVAMNVDNLNVNLFKGEYIETKDWDEFITKQDVIVDTRNDYEVEVGTFKAAINPYTETFKQFPAWVEQNAELLKGKKIAMFCTGGIRCEKSTSLLKSMGHEEVYHLKGGILQYLEDTQNKNNLWQGECFVFDDRRAVADDLAPAEGYWLERK.

One can recognise a Rhodanese domain in the interval 123-217 (ITKQDVIVDT…YLEDTQNKNN (95 aa)). Residue Cys-177 is the Cysteine persulfide intermediate of the active site.

This sequence belongs to the TrhO family.

It carries out the reaction uridine(34) in tRNA + AH2 + O2 = 5-hydroxyuridine(34) in tRNA + A + H2O. Catalyzes oxygen-dependent 5-hydroxyuridine (ho5U) modification at position 34 in tRNAs. In Rickettsia bellii (strain RML369-C), this protein is tRNA uridine(34) hydroxylase.